The chain runs to 86 residues: Putative defensin-like protein 9 (86 aa).

The signal sequence occupies residues 1-29; sequence MKSSMQLISTLFFLVILVVAPGMKMVVEG. Q30 is modified (pyrrolidone carboxylic acid). 4 disulfides stabilise this stretch: C34/C79, C45/C65, C51/C73, and C55/C75.

It belongs to the DEFL family.

The protein resides in the secreted. This Arabidopsis thaliana (Mouse-ear cress) protein is Putative defensin-like protein 9 (LCR76).